The chain runs to 245 residues: Transcriptional regulatory protein VxrB (245 aa).

The region spanning 31-142 is the Response regulatory domain; it reads TLLLVEDDKN…ELFARIRAQL (112 aa). Asp78 is modified (4-aspartylphosphate). A DNA-binding region (ompR/PhoB-type) is located at residues 151–245; it reads DSKVVTSNLT…LRGVGYKMKA (95 aa).

Phosphorylated by VxrA.

The protein localises to the cytoplasm. In terms of biological role, member of the two-component regulatory system VxrB/VxrA involved in the regulation of diverses processes, including virulence, the type VI secretion system (T6SS) and biofilm formation. VxrB positively regulates the expression of the T6SS, a virulence nanomachine that directly translocates effectors into bacterial or host cells, thereby facilitating colonization by competing with sister cells and intestinal microbiota. In addition, it activates vpsL expression and biofilm formation, and represses motility. May regulate biofilm formation via its regulation of key biofilm regulators and cyclic di-GMP levels. Significantly contributes to both attack and defense via T6SS, while also influencing competition via regulation of biofilm matrix production. Is critical for colonization in the infant mouse model. The polypeptide is Transcriptional regulatory protein VxrB (Vibrio cholerae serotype O1 (strain ATCC 39315 / El Tor Inaba N16961)).